The chain runs to 772 residues: Semaphorin-3A (772 aa).

Residues 1-20 (MGWFTGIACLFWGILLTARA) form the signal peptide. The Sema domain occupies 31–514 (RLKLSYKEML…STAGVAQLPL (484 aa)). Asn53 carries N-linked (GlcNAc...) asparagine glycosylation. A disulfide bridge links Cys103 with Cys114. Asn125 carries N-linked (GlcNAc...) asparagine glycosylation. Cystine bridges form between Cys132-Cys141, Cys269-Cys381, Cys293-Cys341, and Cys517-Cys535. One can recognise an Ig-like C2-type domain in the interval 577-665 (HGHSLEERII…GFMQTLLKVT (89 aa)). Asn591 is a glycosylation site (N-linked (GlcNAc...) asparagine). Cysteines 650 and 723 form a disulfide. A compositionally biased stretch (basic and acidic residues) spans 677–691 (LLHKDDDGDGSKTKE). 2 disordered regions span residues 677-698 (LLHK…SMTP) and 729-772 (RDRK…PRSV). A compositionally biased stretch (basic residues) spans 729–738 (RDRKQRRQRP). Residues 750 to 772 (HMQESKKGRNRRTHEFERAPRSV) show a composition bias toward basic and acidic residues.

This sequence belongs to the semaphorin family. As to quaternary structure, interacts with PLXND1. In terms of tissue distribution, expressed in the dorsal root ganglia.

It localises to the secreted. Functionally, may be involved in guiding growing axons towards their targets by forming a molecular boundary that instructs axons to engage in the formation of specific nerve tracts. Binds to neuropilin. Involved in the development of the olfactory system and in neuronal control of puberty. This Rattus norvegicus (Rat) protein is Semaphorin-3A (Sema3a).